The primary structure comprises 657 residues: uncharacterized protein (657 aa).

Residues 1 to 26 (MFGKGLVKKSLLFFSGVSTMAVFLVS) form the signal peptide. Cysteine 27 is lipidated: N-palmitoyl cysteine. The S-diacylglycerol cysteine moiety is linked to residue cysteine 27. Disordered regions lie at residues 291–316 (ISPK…FSST), 468–496 (RLSS…DGII), and 516–563 (KSMT…KETN). Residues 294-304 (KQGSDNNSNLS) show a composition bias toward polar residues. Residues 469–495 (LSSDDTNTKKALKEVSTHKNGSDKDGI) show a composition bias toward basic and acidic residues. The segment covering 516–525 (KSMTDNNSGT) has biased composition (polar residues). The span at 526 to 545 (EQKKNLSEVDTKKKEKESKG) shows a compositional bias: basic and acidic residues. Positions 546-559 (KTQSNGQDSGQQNG) are enriched in low complexity.

It to T.pallidum TmpC.

It is found in the cell membrane. This is an uncharacterized protein from Mycoplasma pneumoniae (strain ATCC 29342 / M129 / Subtype 1) (Mycoplasmoides pneumoniae).